Reading from the N-terminus, the 209-residue chain is Large ribosomal subunit protein uL3 (209 aa).

The interval 127 to 166 (NFGGGSRTHGQSDRLRAPGSVGGSSDPSRTFKGTRMAGRM) is disordered.

The protein belongs to the universal ribosomal protein uL3 family. As to quaternary structure, part of the 50S ribosomal subunit. Forms a cluster with proteins L14 and L19.

Functionally, one of the primary rRNA binding proteins, it binds directly near the 3'-end of the 23S rRNA, where it nucleates assembly of the 50S subunit. The sequence is that of Large ribosomal subunit protein uL3 from Chlorobaculum tepidum (strain ATCC 49652 / DSM 12025 / NBRC 103806 / TLS) (Chlorobium tepidum).